A 262-amino-acid chain; its full sequence is KTSTRTRCAFEVAARDQGAGVTYLEPSASQIGHKESIKDTARVLGRMYDAIEYRGFGQEVVEELAKYAGVPVFNGLTNEFHPTQMLADALTMREHSGKPLNQTAFAYVGDARYNMGNSLLILGAKLGMDVRIGAPQSLWPSEGIIAAAHAAAKETGAKITLTENAHEAVKNVDFIHTDVWVSMGEPKEVWQERIDLLKDYRVTPELMAASGNPQVKFMHCLPAFHNRETKVGEWIYETFGLNGVEVTEEVFESPASIVFDQA.

Carbamoyl phosphate contacts are provided by residues 3–7, Q30, R54, and 81–84; these read STRTR and HPTQ. Residues N114, D178, and 182–183 each bind L-ornithine; that span reads SM. Residues 219–222 and T247 contribute to the carbamoyl phosphate site; that span reads HCLP.

The protein belongs to the aspartate/ornithine carbamoyltransferase superfamily. OTCase family.

The protein localises to the cytoplasm. It catalyses the reaction carbamoyl phosphate + L-ornithine = L-citrulline + phosphate + H(+). The protein operates within amino-acid biosynthesis; L-arginine biosynthesis; L-arginine from L-ornithine and carbamoyl phosphate: step 1/3. Its pathway is amino-acid degradation; L-arginine degradation via ADI pathway; carbamoyl phosphate from L-arginine: step 2/2. Reversibly catalyzes the transfer of the carbamoyl group from carbamoyl phosphate (CP) to the N(epsilon) atom of ornithine (ORN) to produce L-citrulline. The chain is Ornithine carbamoyltransferase (argF) from Neisseria meningitidis.